The following is a 132-amino-acid chain: Venom CUB domain-containing protein 2 (132 aa).

An N-terminal signal peptide occupies residues 1–17 (MKTLFLAIALFSAVALA). One can recognise a CUB domain in the interval 22–129 (ESAELVPGGE…RGFVACKATA (108 aa)). Intrachain disulfides connect Cys-66/Cys-125 and Cys-77/Cys-94.

The protein belongs to the venom CUB family. Expressed by the venom gland (posterior main gland) (at protein level).

The protein localises to the secreted. This is Venom CUB domain-containing protein 2 from Platymeris rhadamanthus (Red spot assassin bug).